Here is a 203-residue protein sequence, read N- to C-terminus: uncharacterized protein (203 aa).

A helical membrane pass occupies residues 171-191 (VGYLSIWLKEYWYLVVLFVLI).

The protein localises to the membrane. This is an uncharacterized protein from Methanocaldococcus jannaschii (strain ATCC 43067 / DSM 2661 / JAL-1 / JCM 10045 / NBRC 100440) (Methanococcus jannaschii).